The following is a 262-amino-acid chain: Acyl-[acyl-carrier-protein]--UDP-N-acetylglucosamine O-acyltransferase (262 aa).

The protein belongs to the transferase hexapeptide repeat family. LpxA subfamily. Homotrimer.

It localises to the cytoplasm. It catalyses the reaction a (3R)-hydroxyacyl-[ACP] + UDP-N-acetyl-alpha-D-glucosamine = a UDP-3-O-[(3R)-3-hydroxyacyl]-N-acetyl-alpha-D-glucosamine + holo-[ACP]. Its pathway is glycolipid biosynthesis; lipid IV(A) biosynthesis; lipid IV(A) from (3R)-3-hydroxytetradecanoyl-[acyl-carrier-protein] and UDP-N-acetyl-alpha-D-glucosamine: step 1/6. In terms of biological role, involved in the biosynthesis of lipid A, a phosphorylated glycolipid that anchors the lipopolysaccharide to the outer membrane of the cell. The polypeptide is Acyl-[acyl-carrier-protein]--UDP-N-acetylglucosamine O-acyltransferase (Cronobacter sakazakii (strain ATCC BAA-894) (Enterobacter sakazakii)).